We begin with the raw amino-acid sequence, 420 residues long: RING finger protein 39 (420 aa).

Residues 88–135 (CPLCGGSFEDPVLLACEHSFCRACLARRWGTPPATGTEASPTACPCCG) form an RING-type zinc finger. A B30.2/SPRY domain is found at 210 to 420 (DDLPEDYPVV…APLRIVPAES (211 aa)). Residues 246–265 (DRRSVQLAPPGTPAPPDGPK) are disordered.

The protein resides in the cytoplasm. It catalyses the reaction S-ubiquitinyl-[E2 ubiquitin-conjugating enzyme]-L-cysteine + [acceptor protein]-L-lysine = [E2 ubiquitin-conjugating enzyme]-L-cysteine + N(6)-ubiquitinyl-[acceptor protein]-L-lysine.. It participates in protein modification; protein ubiquitination. Plays an inhibitory role in anti-RNA viral innate immunity by targeting the adapter DDX3X and promoting its 'Lys-48'-linked polyubiquitination. Alternatively, enhances the cGAS-STING pathway activation by promoting 'Lys-63'-linked ubiquitination of STING1, facilitating the STING1-TBK1 complex formation and STING1 activation. The protein is RING finger protein 39 (RNF39) of Pan troglodytes (Chimpanzee).